The primary structure comprises 278 residues: Polyamine aminopropyltransferase (278 aa).

Positions 3–240 (EGWFTEAVED…GWWSATLMVN (238 aa)) constitute a PABS domain. Glutamine 33 provides a ligand contact to S-methyl-5'-thioadenosine. Residues histidine 64 and aspartate 88 each contribute to the spermidine site. S-methyl-5'-thioadenosine-binding positions include glutamate 108 and 139–140 (DG). Aspartate 158 acts as the Proton acceptor in catalysis. 158 to 161 (DSTD) provides a ligand contact to spermidine. Position 165 (proline 165) interacts with S-methyl-5'-thioadenosine.

Belongs to the spermidine/spermine synthase family. As to quaternary structure, homodimer or homotetramer.

The protein localises to the cytoplasm. The enzyme catalyses S-adenosyl 3-(methylsulfanyl)propylamine + putrescine = S-methyl-5'-thioadenosine + spermidine + H(+). The protein operates within amine and polyamine biosynthesis; spermidine biosynthesis; spermidine from putrescine: step 1/1. In terms of biological role, catalyzes the irreversible transfer of a propylamine group from the amino donor S-adenosylmethioninamine (decarboxy-AdoMet) to putrescine (1,4-diaminobutane) to yield spermidine. This Halorhodospira halophila (strain DSM 244 / SL1) (Ectothiorhodospira halophila (strain DSM 244 / SL1)) protein is Polyamine aminopropyltransferase.